The chain runs to 352 residues: Holliday junction branch migration complex subunit RuvB (352 aa).

The tract at residues 4-185 is large ATPase domain (RuvB-L); that stretch reads PDRLISAVSG…FGIVQRLEFY (182 aa). ATP-binding positions include Ile24, Arg25, Gly66, Lys69, Thr70, Thr71, 132–134, Arg175, Tyr185, and Arg222; that span reads EDF. Thr70 contributes to the Mg(2+) binding site. The segment at 186-256 is small ATPAse domain (RuvB-S); it reads NVEDLATIVS…IADKALNLLD (71 aa). Residues 259–352 form a head domain (RuvB-H) region; the sequence is ERGFDHLDRR…TDLFTSEDGN (94 aa). 3 residues coordinate DNA: Arg295, Arg314, and Arg319.

This sequence belongs to the RuvB family. As to quaternary structure, homohexamer. Forms an RuvA(8)-RuvB(12)-Holliday junction (HJ) complex. HJ DNA is sandwiched between 2 RuvA tetramers; dsDNA enters through RuvA and exits via RuvB. An RuvB hexamer assembles on each DNA strand where it exits the tetramer. Each RuvB hexamer is contacted by two RuvA subunits (via domain III) on 2 adjacent RuvB subunits; this complex drives branch migration. In the full resolvosome a probable DNA-RuvA(4)-RuvB(12)-RuvC(2) complex forms which resolves the HJ.

It is found in the cytoplasm. It carries out the reaction ATP + H2O = ADP + phosphate + H(+). Functionally, the RuvA-RuvB-RuvC complex processes Holliday junction (HJ) DNA during genetic recombination and DNA repair, while the RuvA-RuvB complex plays an important role in the rescue of blocked DNA replication forks via replication fork reversal (RFR). RuvA specifically binds to HJ cruciform DNA, conferring on it an open structure. The RuvB hexamer acts as an ATP-dependent pump, pulling dsDNA into and through the RuvAB complex. RuvB forms 2 homohexamers on either side of HJ DNA bound by 1 or 2 RuvA tetramers; 4 subunits per hexamer contact DNA at a time. Coordinated motions by a converter formed by DNA-disengaged RuvB subunits stimulates ATP hydrolysis and nucleotide exchange. Immobilization of the converter enables RuvB to convert the ATP-contained energy into a lever motion, pulling 2 nucleotides of DNA out of the RuvA tetramer per ATP hydrolyzed, thus driving DNA branch migration. The RuvB motors rotate together with the DNA substrate, which together with the progressing nucleotide cycle form the mechanistic basis for DNA recombination by continuous HJ branch migration. Branch migration allows RuvC to scan DNA until it finds its consensus sequence, where it cleaves and resolves cruciform DNA. The protein is Holliday junction branch migration complex subunit RuvB of Pseudomonas aeruginosa (strain LESB58).